Reading from the N-terminus, the 507-residue chain is Rho GTPase-activating protein 19 (507 aa).

The Rho-GAP domain occupies 112–305; that stretch reads APLTEEGIAQ…FMIKHSQKLF (194 aa). 3 disordered regions span residues 344–371, 400–419, and 483–507; these read FLKH…QQHT, KNTP…KKHV, and DLQI…ETSI. Over residues 355–369 the composition is skewed to low complexity; the sequence is SSPSSSTSLQEQTQQ. Positions 400 to 413 are enriched in polar residues; sequence KNTPRTPVSDTQVP. The segment covering 483 to 492 has biased composition (basic and acidic residues); that stretch reads DLQIRKEASS.

Its function is as follows. GTPase activator for the Rho-type GTPases by converting them to an inactive GDP-bound state. This Xenopus laevis (African clawed frog) protein is Rho GTPase-activating protein 19 (arhgap19).